The chain runs to 327 residues: GTPase Obg (327 aa).

An Obg domain is found at 1–159 (MQFIDQANII…WEVQLELKLL (159 aa)). The region spanning 160-327 (AEVGIIGLPN…SLLSEVWKRI (168 aa)) is the OBG-type G domain. Residues 166-173 (GLPNAGKS), 191-195 (FTTLI), 213-216 (DIPG), 280-283 (NKME), and 309-311 (SSS) each bind ATP. The Mg(2+) site is built by S173 and T193.

This sequence belongs to the TRAFAC class OBG-HflX-like GTPase superfamily. OBG GTPase family. In terms of assembly, monomer. Mg(2+) serves as cofactor.

The protein resides in the cytoplasm. Functionally, an essential GTPase which binds GTP, GDP and possibly (p)ppGpp with moderate affinity, with high nucleotide exchange rates and a fairly low GTP hydrolysis rate. Plays a role in control of the cell cycle, stress response, ribosome biogenesis and in those bacteria that undergo differentiation, in morphogenesis control. In Prochlorococcus marinus (strain MIT 9301), this protein is GTPase Obg.